We begin with the raw amino-acid sequence, 91 residues long: Putative antitoxin YutD (91 aa).

The cysteines at positions 77 and 81 are disulfide-linked.

In terms of assembly, homodimer, probably forms a complex with cognate toxin YutE.

Functionally, probable antitoxin component of a putative type VII toxin-antitoxin (TA) system. Probably neutralizes cognate toxin YutE. The protein is Putative antitoxin YutD (yutD) of Bacillus subtilis (strain 168).